The sequence spans 227 residues: Probable GTP-binding protein EngB (227 aa).

Residues 30–219 (KKPQIIVVGR…MVKINKNVNE (190 aa)) enclose the EngB-type G domain. Residues 38-45 (GRSNVGKS), 63-67 (GVTLK), 80-83 (DLPG), 160-163 (NKMD), and 197-199 (IGI) each bind GTP. Positions 45 and 65 each coordinate Mg(2+).

This sequence belongs to the TRAFAC class TrmE-Era-EngA-EngB-Septin-like GTPase superfamily. EngB GTPase family. Mg(2+) is required as a cofactor.

Its function is as follows. Necessary for normal cell division and for the maintenance of normal septation. This chain is Probable GTP-binding protein EngB, found in Methanococcus aeolicus (strain ATCC BAA-1280 / DSM 17508 / OCM 812 / Nankai-3).